A 178-amino-acid chain; its full sequence is Dual-action ribosomal maturation protein DarP (178 aa).

This sequence belongs to the DarP family.

The protein resides in the cytoplasm. Its function is as follows. Member of a network of 50S ribosomal subunit biogenesis factors which assembles along the 30S-50S interface, preventing incorrect 23S rRNA structures from forming. Promotes peptidyl transferase center (PTC) maturation. The polypeptide is Dual-action ribosomal maturation protein DarP (Mannheimia succiniciproducens (strain KCTC 0769BP / MBEL55E)).